The sequence spans 396 residues: DNA polymerase interacting tetratricopeptide repeat-containing, protein of 47 kDa (396 aa).

3 TPR repeats span residues 91–124 (ALNY…KTDN), 129–162 (AVLY…KPDY), and 163–196 (TKAR…DVDN).

Belongs to the TTC4 family. In terms of assembly, forms a complex with Hsp83 and Hsp70aa. Interacts with DNApol-alpha180; the interaction inhibits the activity of the DNA polymerase and occurs only in proliferating cells but not in quiescent cells. More abundant in young embryos, pupae and females and a lower level expression seen in late embryos, larvae and males.

The protein resides in the nucleus. Its subcellular location is the nucleoplasm. It localises to the cytoplasm. May act as a co-chaperone for HSP83. The chain is DNA polymerase interacting tetratricopeptide repeat-containing, protein of 47 kDa (Dpit47) from Drosophila melanogaster (Fruit fly).